The following is a 345-amino-acid chain: Methylthioribose-1-phosphate isomerase 2 (345 aa).

Residues 47–49 (RGA), Arg88, and Gln194 each bind substrate. Residue Asp235 is the Proton donor of the active site. 245–246 (NK) provides a ligand contact to substrate.

The protein belongs to the eIF-2B alpha/beta/delta subunits family. MtnA subfamily.

The catalysed reaction is 5-(methylsulfanyl)-alpha-D-ribose 1-phosphate = 5-(methylsulfanyl)-D-ribulose 1-phosphate. It functions in the pathway amino-acid biosynthesis; L-methionine biosynthesis via salvage pathway; L-methionine from S-methyl-5-thio-alpha-D-ribose 1-phosphate: step 1/6. Functionally, catalyzes the interconversion of methylthioribose-1-phosphate (MTR-1-P) into methylthioribulose-1-phosphate (MTRu-1-P). The sequence is that of Methylthioribose-1-phosphate isomerase 2 from Pseudothermotoga lettingae (strain ATCC BAA-301 / DSM 14385 / NBRC 107922 / TMO) (Thermotoga lettingae).